A 72-amino-acid polypeptide reads, in one-letter code: Translation initiation factor IF-1 (72 aa).

One can recognise an S1-like domain in the interval 1-72 (MAGNDVIEIE…TKGRITYRHK (72 aa)).

This sequence belongs to the IF-1 family. Component of the 30S ribosomal translation pre-initiation complex which assembles on the 30S ribosome in the order IF-2 and IF-3, IF-1 and N-formylmethionyl-tRNA(fMet); mRNA recruitment can occur at any time during PIC assembly.

It localises to the cytoplasm. Its function is as follows. One of the essential components for the initiation of protein synthesis. Stabilizes the binding of IF-2 and IF-3 on the 30S subunit to which N-formylmethionyl-tRNA(fMet) subsequently binds. Helps modulate mRNA selection, yielding the 30S pre-initiation complex (PIC). Upon addition of the 50S ribosomal subunit IF-1, IF-2 and IF-3 are released leaving the mature 70S translation initiation complex. This Oenococcus oeni (strain ATCC BAA-331 / PSU-1) protein is Translation initiation factor IF-1.